The following is a 432-amino-acid chain: Phosphomethylpyrimidine synthase (432 aa).

Residues N69, M98, Y127, H163, 185–187 (SRG), 226–229 (DACR), and E265 contribute to the substrate site. H269 contributes to the Zn(2+) binding site. Position 292 (Y292) interacts with substrate. A Zn(2+)-binding site is contributed by H333. [4Fe-4S] cluster is bound by residues C409, C412, and C416.

This sequence belongs to the ThiC family. [4Fe-4S] cluster is required as a cofactor.

It carries out the reaction 5-amino-1-(5-phospho-beta-D-ribosyl)imidazole + S-adenosyl-L-methionine = 4-amino-2-methyl-5-(phosphooxymethyl)pyrimidine + CO + 5'-deoxyadenosine + formate + L-methionine + 3 H(+). Its pathway is cofactor biosynthesis; thiamine diphosphate biosynthesis. Its function is as follows. Catalyzes the synthesis of the hydroxymethylpyrimidine phosphate (HMP-P) moiety of thiamine from aminoimidazole ribotide (AIR) in a radical S-adenosyl-L-methionine (SAM)-dependent reaction. The sequence is that of Phosphomethylpyrimidine synthase from Pelotomaculum thermopropionicum (strain DSM 13744 / JCM 10971 / SI).